A 361-amino-acid polypeptide reads, in one-letter code: Tetraacyldisaccharide 4'-kinase (361 aa).

49 to 56 (TTGGTGKT) contributes to the ATP binding site.

This sequence belongs to the LpxK family.

The enzyme catalyses a lipid A disaccharide + ATP = a lipid IVA + ADP + H(+). The protein operates within glycolipid biosynthesis; lipid IV(A) biosynthesis; lipid IV(A) from (3R)-3-hydroxytetradecanoyl-[acyl-carrier-protein] and UDP-N-acetyl-alpha-D-glucosamine: step 6/6. Functionally, transfers the gamma-phosphate of ATP to the 4'-position of a tetraacyldisaccharide 1-phosphate intermediate (termed DS-1-P) to form tetraacyldisaccharide 1,4'-bis-phosphate (lipid IVA). This is Tetraacyldisaccharide 4'-kinase from Chlorobaculum parvum (strain DSM 263 / NCIMB 8327) (Chlorobium vibrioforme subsp. thiosulfatophilum).